A 169-amino-acid polypeptide reads, in one-letter code: Peptide methionine sulfoxide reductase MsrA (169 aa).

The active site involves Cys10.

The protein belongs to the MsrA Met sulfoxide reductase family.

The catalysed reaction is L-methionyl-[protein] + [thioredoxin]-disulfide + H2O = L-methionyl-(S)-S-oxide-[protein] + [thioredoxin]-dithiol. It carries out the reaction [thioredoxin]-disulfide + L-methionine + H2O = L-methionine (S)-S-oxide + [thioredoxin]-dithiol. In terms of biological role, has an important function as a repair enzyme for proteins that have been inactivated by oxidation. Catalyzes the reversible oxidation-reduction of methionine sulfoxide in proteins to methionine. The sequence is that of Peptide methionine sulfoxide reductase MsrA from Streptococcus pyogenes serotype M1.